The following is a 224-amino-acid chain: Protein FAM3D (224 aa).

The signal sequence occupies residues Met-1 to Ser-25. Disulfide bonds link Cys-55–Cys-83 and Cys-61–Cys-218. In terms of domain architecture, GG-type lectin spans Asn-64–Lys-222. Residue Asn-107 is glycosylated (N-linked (GlcNAc...) asparagine).

Belongs to the FAM3 family. Abundantly expressed in placenta and weakly expressed in small intestine.

It is found in the secreted. The polypeptide is Protein FAM3D (FAM3D) (Homo sapiens (Human)).